The sequence spans 805 residues: MKYDFTEIEKKWQAYWEQHQTFKATEEPNKPKYYVLDMFPYPSGSGLHVGHLEGYTASDITARYKRLKGFSVLHPMGWDAFGLPAEQYAIKTGTHPRLTTETNVANFKSTLQRMGFSYDWSREINTTDPGYVKWTQWIFLKLYEKGLAYVDDVPVNWCEELKVVLANEEVDEKVNDGYTVVRRPLRQWMLKITAYAERLLTDLDEVDWPESVKEMQRNWIGKSVGAELDFYLAGTDEKFRIFTTRPDTVFGATYMVLSPEHPLLDKITTDEHKSAVAAYREEAERKSDLERTGLQKEKTGVFTGSYALNPATGKEIPIWTSDFVLMGYGTGAIMSVPAHDERDWEFAKKFGIPIVEVIKSPHSVQEAVFAGKDSVCTNSENAEISINGLAYEEAFEKITDWFEKKGLGQRKVNYKLRDWLFSRQRYWGEPIPIKHYEDGAERAETELPLNLPEVSAYQPSGTGESPLANIAEWLYGEDEHGKFRRETNTMPQWAGSCWYYLRFIDPDNPNEAVSPEKEKYWMNVDLYIGGAEHAVLHLLYARFWHKVLYDVGVVSTKEPFRKLFNQGMILGEDNEKMSKSRGNVITADSVMSGYGADAVRLYEMFLGPLEQVKPWSTNGIEGISRFLGKVWRLVYPNEADGTVQVTDDAPSETVLRRMHKTIKKVGEDTETLKFNTAISEMMIYVNELQKEKCRSRTAIENLLLMLSPFAPHICEELWQALGHEESITFAKFPEYDATLAKDDVVTIAVQVNGKLRGTFDAAAGLSKDDMIAEAMKVESVIKFTEGKEIVKQIAVPNKLVNLVVK.

The 'HIGH' region motif lies at 40-51; the sequence is PYPSGSGLHVGH. The 'KMSKS' region motif lies at 576–580; it reads KMSKS. Residue Lys-579 coordinates ATP.

Belongs to the class-I aminoacyl-tRNA synthetase family.

Its subcellular location is the cytoplasm. The catalysed reaction is tRNA(Leu) + L-leucine + ATP = L-leucyl-tRNA(Leu) + AMP + diphosphate. In Chloroherpeton thalassium (strain ATCC 35110 / GB-78), this protein is Leucine--tRNA ligase.